The chain runs to 155 residues: Small ribosomal subunit protein uS7cz/uS7cy (155 aa).

Belongs to the universal ribosomal protein uS7 family. In terms of assembly, part of the 30S ribosomal subunit.

The protein resides in the plastid. The protein localises to the chloroplast. Functionally, one of the primary rRNA binding proteins, it binds directly to 16S rRNA where it nucleates assembly of the head domain of the 30S subunit. The polypeptide is Small ribosomal subunit protein uS7cz/uS7cy (rps7-A) (Amborella trichopoda).